Consider the following 202-residue polypeptide: Adenylate kinase (202 aa).

12 to 20 (GVPGVGKTT) serves as a coordination point for ATP.

It belongs to the archaeal adenylate kinase family.

It is found in the cytoplasm. It catalyses the reaction AMP + ATP = 2 ADP. The sequence is that of Adenylate kinase (adkA) from Aeropyrum pernix (strain ATCC 700893 / DSM 11879 / JCM 9820 / NBRC 100138 / K1).